The following is an 825-amino-acid chain: BEN domain-containing protein 3 (825 aa).

A compositionally biased stretch (acidic residues) spans 1–11; the sequence is MNSTEISEDVE. Residues 1-35 form a disordered region; that stretch reads MNSTEISEDVEEVLKNNPVKAEGSDATLDCSRNSR. A Glycyl lysine isopeptide (Lys-Gly) (interchain with G-Cter in SUMO); alternate cross-link involves residue Lys20. Residue Lys20 forms a Glycyl lysine isopeptide (Lys-Gly) (interchain with G-Cter in SUMO1); alternate linkage. Lys20 participates in a covalent cross-link: Glycyl lysine isopeptide (Lys-Gly) (interchain with G-Cter in SUMO2); alternate. Glycyl lysine isopeptide (Lys-Gly) (interchain with G-Cter in SUMO2) cross-links involve residues Lys39, Lys54, Lys56, Lys71, Lys126, Lys127, Lys135, Lys140, Lys156, and Lys174. Residues 52–122 form a disordered region; the sequence is SSKRKQLDSD…EEEPSTEATV (71 aa). The Nuclear localization signal signature appears at 54 to 56; sequence KRK. A BEN 1 domain is found at 239–340; sequence PPPEYQLTAS…DFFSRFWAQR (102 aa). The residue at position 376 (Ser376) is a Phosphoserine. Residues 384 to 484 enclose the BEN 2 domain; it reads ASDHVVDTQD…DELEGLGLEG (101 aa). Lys424 is covalently cross-linked (Glycyl lysine isopeptide (Lys-Gly) (interchain with G-Cter in SUMO2)). At Ser486 the chain carries Phosphoserine. Lys509 is covalently cross-linked (Glycyl lysine isopeptide (Lys-Gly) (interchain with G-Cter in SUMO); alternate). Lys509 is covalently cross-linked (Glycyl lysine isopeptide (Lys-Gly) (interchain with G-Cter in SUMO2); alternate). Residue Lys525 forms a Glycyl lysine isopeptide (Lys-Gly) (interchain with G-Cter in SUMO2) linkage. The BEN 3 domain maps to 547-647; sequence GSDCLLSKEQ…ERCRRRDTEQ (101 aa). Lys697 participates in a covalent cross-link: Glycyl lysine isopeptide (Lys-Gly) (interchain with G-Cter in SUMO2). Positions 712–813 constitute a BEN 4 domain; that stretch reads VPSPYLLSDK…ERCRRPNRKK (102 aa).

Homooligomer, probably a homooctamer. Interacts with HDAC2 and HDAC3, but not HDAC1. Interacts with SALL4. Interacts with SMARCA5/SNF2H, BAZ2A/TIP5 and USP21. Interacts with the nucleosome remodeling and histone deacetylase (NuRD) repressor complex. Interacts (via BEN domains 1 and 3) with ERCC6L (via N-terminal TPR repeat); the interaction is direct. Sumoylated at Lys-20 by SUMO1 and at Lys-509 by SUMO1, SUMO2 and SUMO3. Sumoylation probably occurs sequentially, with that of Lys-20 preceding that of Lys-509. It does not alter association with heterochromatin, but is required for the repression of transcription.

Its subcellular location is the nucleus. The protein resides in the nucleolus. Transcriptional repressor which associates with the NoRC (nucleolar remodeling complex) complex and plays a key role in repressing rDNA transcription. The sumoylated form modulates the stability of the NoRC complex component BAZ2A/TIP5 by controlling its USP21-mediated deubiquitination. Binds to unmethylated major satellite DNA and is involved in the recruitment of the Polycomb repressive complex 2 (PRC2) to major satellites. Stimulates the ERCC6L translocase and ATPase activities. This chain is BEN domain-containing protein 3 (Bend3), found in Mus musculus (Mouse).